The following is a 334-amino-acid chain: Holliday junction branch migration complex subunit RuvB (334 aa).

The tract at residues 1-180 is large ATPase domain (RuvB-L); the sequence is MSEFLTPERT…FGIILELDFY (180 aa). ATP contacts are provided by residues Leu19, Arg20, Gly61, Lys64, Thr65, Thr66, 127–129, Arg170, Tyr180, and Arg217; that span reads EDF. Residue Thr65 coordinates Mg(2+). A small ATPAse domain (RuvB-S) region spans residues 181–251; it reads TVKELKEIIK…IVLKTMEVLN (71 aa). The tract at residues 254–334 is head domain (RuvB-H); the sequence is AEGLDEFDRK…KYEVPENRLF (81 aa). Positions 309 and 314 each coordinate DNA.

The protein belongs to the RuvB family. In terms of assembly, homohexamer. Forms an RuvA(8)-RuvB(12)-Holliday junction (HJ) complex. HJ DNA is sandwiched between 2 RuvA tetramers; dsDNA enters through RuvA and exits via RuvB. An RuvB hexamer assembles on each DNA strand where it exits the tetramer. Each RuvB hexamer is contacted by two RuvA subunits (via domain III) on 2 adjacent RuvB subunits; this complex drives branch migration. In the full resolvosome a probable DNA-RuvA(4)-RuvB(12)-RuvC(2) complex forms which resolves the HJ.

It is found in the cytoplasm. The enzyme catalyses ATP + H2O = ADP + phosphate + H(+). Its function is as follows. The RuvA-RuvB-RuvC complex processes Holliday junction (HJ) DNA during genetic recombination and DNA repair, while the RuvA-RuvB complex plays an important role in the rescue of blocked DNA replication forks via replication fork reversal (RFR). RuvA specifically binds to HJ cruciform DNA, conferring on it an open structure. The RuvB hexamer acts as an ATP-dependent pump, pulling dsDNA into and through the RuvAB complex. RuvB forms 2 homohexamers on either side of HJ DNA bound by 1 or 2 RuvA tetramers; 4 subunits per hexamer contact DNA at a time. Coordinated motions by a converter formed by DNA-disengaged RuvB subunits stimulates ATP hydrolysis and nucleotide exchange. Immobilization of the converter enables RuvB to convert the ATP-contained energy into a lever motion, pulling 2 nucleotides of DNA out of the RuvA tetramer per ATP hydrolyzed, thus driving DNA branch migration. The RuvB motors rotate together with the DNA substrate, which together with the progressing nucleotide cycle form the mechanistic basis for DNA recombination by continuous HJ branch migration. Branch migration allows RuvC to scan DNA until it finds its consensus sequence, where it cleaves and resolves cruciform DNA. This chain is Holliday junction branch migration complex subunit RuvB, found in Thermotoga petrophila (strain ATCC BAA-488 / DSM 13995 / JCM 10881 / RKU-1).